Reading from the N-terminus, the 298-residue chain is N-acetylmuramic acid 6-phosphate etherase (298 aa).

In terms of domain architecture, SIS spans 55-218 (IHTQVSGGGR…STGLMIKSGK (164 aa)). The active-site Proton donor is glutamate 83. Residue glutamate 114 is part of the active site.

It belongs to the GCKR-like family. MurNAc-6-P etherase subfamily. As to quaternary structure, homodimer.

It catalyses the reaction N-acetyl-D-muramate 6-phosphate + H2O = N-acetyl-D-glucosamine 6-phosphate + (R)-lactate. It functions in the pathway amino-sugar metabolism; 1,6-anhydro-N-acetylmuramate degradation. The protein operates within amino-sugar metabolism; N-acetylmuramate degradation. Its pathway is cell wall biogenesis; peptidoglycan recycling. In terms of biological role, specifically catalyzes the cleavage of the D-lactyl ether substituent of MurNAc 6-phosphate, producing GlcNAc 6-phosphate and D-lactate. Together with AnmK, is also required for the utilization of anhydro-N-acetylmuramic acid (anhMurNAc) either imported from the medium or derived from its own cell wall murein, and thus plays a role in cell wall recycling. The sequence is that of N-acetylmuramic acid 6-phosphate etherase from Escherichia coli O6:K15:H31 (strain 536 / UPEC).